The sequence spans 255 residues: Pimeloyl-[acyl-carrier protein] methyl ester esterase (255 aa).

One can recognise an AB hydrolase-1 domain in the interval 16–241; the sequence is LVLLHGWGLN…AAHAPFISHP (226 aa). Residues Trp-22, 81–82, and 142–146 each bind substrate; these read SL and FLALQ. Ser-81 (nucleophile) is an active-site residue. Active-site residues include Asp-206 and His-234. His-234 is a binding site for substrate.

This sequence belongs to the AB hydrolase superfamily. Carboxylesterase BioH family. In terms of assembly, monomer.

The protein resides in the cytoplasm. The enzyme catalyses 6-carboxyhexanoyl-[ACP] methyl ester + H2O = 6-carboxyhexanoyl-[ACP] + methanol + H(+). The protein operates within cofactor biosynthesis; biotin biosynthesis. In terms of biological role, the physiological role of BioH is to remove the methyl group introduced by BioC when the pimeloyl moiety is complete. It allows to synthesize pimeloyl-ACP via the fatty acid synthetic pathway through the hydrolysis of the ester bonds of pimeloyl-ACP esters. Also displays a weak thioesterase activity. Can form a complex with CoA, and may be involved in the condensation of CoA and pimelic acid into pimeloyl-CoA, a precursor in biotin biosynthesis. This is Pimeloyl-[acyl-carrier protein] methyl ester esterase from Serratia marcescens.